The primary structure comprises 86 residues: Large ribosomal subunit protein bL27 (86 aa).

A disordered region spans residues 1 to 21 (MAHKKGASSSRNGRDSAAQRL).

The protein belongs to the bacterial ribosomal protein bL27 family.

The chain is Large ribosomal subunit protein bL27 (rpmA) from Mycobacterium tuberculosis (strain CDC 1551 / Oshkosh).